Reading from the N-terminus, the 90-residue chain is E22 protein (90 aa).

In Bacillus subtilis (Bacteriophage SP01), this protein is E22 protein (43).